The sequence spans 214 residues: A-type ATP synthase subunit D (214 aa).

This sequence belongs to the V-ATPase D subunit family. As to quaternary structure, has multiple subunits with at least A(3), B(3), C, D, E, F, H, I and proteolipid K(x).

It localises to the cell membrane. In terms of biological role, component of the A-type ATP synthase that produces ATP from ADP in the presence of a proton gradient across the membrane. This chain is A-type ATP synthase subunit D, found in Methanosphaera stadtmanae (strain ATCC 43021 / DSM 3091 / JCM 11832 / MCB-3).